A 1180-amino-acid polypeptide reads, in one-letter code: DNA-directed RNA polymerase subunit beta' (1180 aa).

Positions 60, 62, 75, and 78 each coordinate Zn(2+). Residues Asp-449, Asp-451, and Asp-453 each coordinate Mg(2+). Zn(2+)-binding residues include Cys-792, Cys-872, Cys-879, and Cys-882.

Belongs to the RNA polymerase beta' chain family. In terms of assembly, the RNAP catalytic core consists of 2 alpha, 1 beta, 1 beta' and 1 omega subunit. When a sigma factor is associated with the core the holoenzyme is formed, which can initiate transcription. It depends on Mg(2+) as a cofactor. Zn(2+) serves as cofactor.

It catalyses the reaction RNA(n) + a ribonucleoside 5'-triphosphate = RNA(n+1) + diphosphate. Its function is as follows. DNA-dependent RNA polymerase catalyzes the transcription of DNA into RNA using the four ribonucleoside triphosphates as substrates. In Heliobacterium modesticaldum (strain ATCC 51547 / Ice1), this protein is DNA-directed RNA polymerase subunit beta'.